The sequence spans 256 residues: 5'-nucleotidase YutF (256 aa).

This sequence belongs to the HAD-like hydrolase superfamily. NagD family. As to quaternary structure, homodimer. Mg(2+) serves as cofactor.

It is found in the cytoplasm. It carries out the reaction a ribonucleoside 5'-phosphate + H2O = a ribonucleoside + phosphate. It catalyses the reaction XMP + H2O = xanthosine + phosphate. In terms of biological role, catalyzes the hydrolysis of various purine and pyrimidine 5'-nucleotides, showing preference for 5'-nucleoside monophosphates and exhibiting the highest catalytic activity toward 5'-XMP. Also shows a relatively high phosphohydrolase activity toward the nucleotide precursors ribose-5-phosphate (R5P) and 5-phosphoribosyl-1-pyrophosphate (PRPP), and toward the non-natural substrate p-nitrophenyl phosphate (pNPP). The sequence is that of 5'-nucleotidase YutF (yutF) from Bacillus subtilis (strain 168).